We begin with the raw amino-acid sequence, 316 residues long: UPF0725 protein At1g02770 (316 aa).

It belongs to the UPF0725 (EMB2204) family.

The chain is UPF0725 protein At1g02770 from Arabidopsis thaliana (Mouse-ear cress).